The sequence spans 101 residues: uncharacterized protein (101 aa).

Over residues 65-79 the composition is skewed to low complexity; sequence QEAAAPAGPQEPAEA. The tract at residues 65–101 is disordered; that stretch reads QEAAAPAGPQEPAEASGDAGKKEEVEEEEIEIDFGMF. Residues 89–101 are compositionally biased toward acidic residues; that stretch reads VEEEEIEIDFGMF.

This is an uncharacterized protein from Encephalitozoon cuniculi (strain GB-M1) (Microsporidian parasite).